The sequence spans 446 residues: Rhoptry surface protein CERLI1 (446 aa).

Residues 39–208 (KPIGQLYRLM…NQTKNNEKIE (170 aa)) form the C2 domain. Positions 252–363 (GYLLHSNFYI…ILVSNYKRER (112 aa)) constitute a PH domain.

It localises to the cytoplasmic vesicle. The protein localises to the secretory vesicle. The protein resides in the rhoptry membrane. In terms of biological role, essential for merozoite invasion of host cells by controlling rhoptry secretion. Binds to phosphatidic acid (PA) and phosphatidylinositol 4,5-bisphosphate (PIP2) lipids and thus, likely contributes to the assembly of the machinery that docks or primes the rhoptry to the parasite cell membrane prior to the fusion with the host cell membrane. This chain is Rhoptry surface protein CERLI1, found in Plasmodium falciparum (isolate 3D7).